The chain runs to 172 residues: R-phycocyanin beta subunit (172 aa).

At N72 the chain carries N4-methylasparagine. (2R,3E)-phycocyanobilin is bound at residue C82. A (2R,3E)-phycoerythrobilin-binding site is contributed by C153.

It belongs to the phycobiliprotein family. In terms of assembly, heterodimer of an alpha and a beta subunit, which further assembles into trimers and the trimers into hexamers. In terms of processing, contains two covalently linked bilin chromophores.

The protein resides in the cellular thylakoid membrane. Light-harvesting photosynthetic bile pigment-protein from the phycobiliprotein complex (phycobilisome, PBS). Phycocyanin is the major phycobiliprotein in the PBS rod. This Synechococcus sp. (strain WH7803) protein is R-phycocyanin beta subunit (rpcB).